Reading from the N-terminus, the 430-residue chain is Histidine--tRNA ligase (430 aa).

The protein belongs to the class-II aminoacyl-tRNA synthetase family. Homodimer.

Its subcellular location is the cytoplasm. The enzyme catalyses tRNA(His) + L-histidine + ATP = L-histidyl-tRNA(His) + AMP + diphosphate + H(+). This chain is Histidine--tRNA ligase, found in Anaplasma marginale (strain Florida).